The chain runs to 382 residues: 2-heptyl-3-hydroxy-4(1H)-quinolone synthase (382 aa).

Belongs to the 3-hydroxybenzoate 6-hydroxylase family.

The catalysed reaction is 2-heptyl-4(1H)-quinolone + NADH + O2 + H(+) = 2-heptyl-3-hydroxy-4(1H)-quinolone + NAD(+) + H2O. In terms of biological role, involved in the terminal step of the biosynthesis of quinolone which in addition to serve as a potent signal for quorum sensing, chelates iron and promotes the formation of membrane vesicles (MVs). Catalyzes the hydroxylation of 2-heptyl-4-quinolone (C7-HHQ) to yield 2-heptyl-3-hydroxy-4-quinolone (PQS). This chain is 2-heptyl-3-hydroxy-4(1H)-quinolone synthase (pqsH), found in Pseudomonas aeruginosa (strain ATCC 15692 / DSM 22644 / CIP 104116 / JCM 14847 / LMG 12228 / 1C / PRS 101 / PAO1).